Reading from the N-terminus, the 79-residue chain is Acyl carrier protein (79 aa).

The 76-residue stretch at 3-78 (QEILEKVCSI…DAVKFIEEKK (76 aa)) folds into the Carrier domain. The residue at position 38 (Ser38) is an O-(pantetheine 4'-phosphoryl)serine.

It belongs to the acyl carrier protein (ACP) family. Post-translationally, 4'-phosphopantetheine is transferred from CoA to a specific serine of apo-ACP by AcpS. This modification is essential for activity because fatty acids are bound in thioester linkage to the sulfhydryl of the prosthetic group.

The protein localises to the cytoplasm. It participates in lipid metabolism; fatty acid biosynthesis. Carrier of the growing fatty acid chain in fatty acid biosynthesis. This Prochlorococcus marinus (strain MIT 9312) protein is Acyl carrier protein.